The following is a 257-amino-acid chain: uncharacterized protein (257 aa).

The protein to yeast YKR015c.

This is an uncharacterized protein from Saccharomyces cerevisiae (strain ATCC 204508 / S288c) (Baker's yeast).